Consider the following 196-residue polypeptide: Peptidyl-tRNA hydrolase (196 aa).

A tRNA-binding site is contributed by Y18. Catalysis depends on H23, which acts as the Proton acceptor. 3 residues coordinate tRNA: F69, N71, and N117.

The protein belongs to the PTH family. Monomer.

Its subcellular location is the cytoplasm. The enzyme catalyses an N-acyl-L-alpha-aminoacyl-tRNA + H2O = an N-acyl-L-amino acid + a tRNA + H(+). In terms of biological role, hydrolyzes ribosome-free peptidyl-tRNAs (with 1 or more amino acids incorporated), which drop off the ribosome during protein synthesis, or as a result of ribosome stalling. Functionally, catalyzes the release of premature peptidyl moieties from peptidyl-tRNA molecules trapped in stalled 50S ribosomal subunits, and thus maintains levels of free tRNAs and 50S ribosomes. The protein is Peptidyl-tRNA hydrolase of Aliivibrio fischeri (strain MJ11) (Vibrio fischeri).